The primary structure comprises 249 residues: 3-deoxy-manno-octulosonate cytidylyltransferase (249 aa).

The protein belongs to the KdsB family.

It localises to the cytoplasm. It catalyses the reaction 3-deoxy-alpha-D-manno-oct-2-ulosonate + CTP = CMP-3-deoxy-beta-D-manno-octulosonate + diphosphate. It functions in the pathway nucleotide-sugar biosynthesis; CMP-3-deoxy-D-manno-octulosonate biosynthesis; CMP-3-deoxy-D-manno-octulosonate from 3-deoxy-D-manno-octulosonate and CTP: step 1/1. It participates in bacterial outer membrane biogenesis; lipopolysaccharide biosynthesis. In terms of biological role, activates KDO (a required 8-carbon sugar) for incorporation into bacterial lipopolysaccharide in Gram-negative bacteria. This is 3-deoxy-manno-octulosonate cytidylyltransferase from Oleidesulfovibrio alaskensis (strain ATCC BAA-1058 / DSM 17464 / G20) (Desulfovibrio alaskensis).